A 1232-amino-acid polypeptide reads, in one-letter code: Chromosome-associated kinesin KIF4A (1232 aa).

Residues Pro-9–Ile-336 enclose the Kinesin motor domain. Gly-88–Thr-95 is an ATP binding site. Positions Glu-350–Val-999 form a coiled coil. Ser-394 is modified (phosphoserine). Residues Ala-496–His-515 are disordered. Positions Gln-497–His-515 are enriched in polar residues. Positions Gln-663 to His-1232 are required for the interaction with PRC1. The Nuclear localization signal signature appears at Pro-793–Arg-798. The residue at position 799 (Thr-799) is a Phosphothreonine. Residues Ser-801, Ser-810, Ser-815, and Ser-951 each carry the phosphoserine modification. Position 995 is a phosphothreonine (Thr-995). Positions Ala-1000–His-1232 are globular. Phosphoserine occurs at positions 1001, 1013, 1017, 1028, and 1126. Residues Cys-1086–Asp-1144 form a CRD; required for [4Fe-4S] cluster binding and localization to the spindle midzone and midbody during anaphase and telophase region. The interval Gln-1122–Leu-1142 is disordered. A compositionally biased stretch (basic and acidic residues) spans Arg-1132–Leu-1142. Position 1181 is a phosphothreonine (Thr-1181). Ser-1186 is modified (phosphoserine). Lys-1194 is covalently cross-linked (Glycyl lysine isopeptide (Lys-Gly) (interchain with G-Cter in SUMO2)). Phosphoserine is present on Ser-1225.

Belongs to the TRAFAC class myosin-kinesin ATPase superfamily. Kinesin family. Chromokinesin subfamily. In terms of assembly, interacts with the cytosolic iron-sulfur protein assembly (CIA) complex components CIAO2B and MMS19; the interactions facilitate the transfer of Fe-S clusters to KIF4A to ensure proper localization of KIF4A to mitotic machinery components. Interacts (via C-terminus) with unphosphorylated PRC1 (via N-terminus); the interaction is required for the progression of mitosis. Requires [2Fe-2S] cluster as cofactor. The cofactor is [4Fe-4S] cluster. Highly expressed in hematopoietic tissues, fetal liver, spleen, thymus and adult thymus and bone marrow. Lower levels are found in heart, testis, kidney, colon and lung.

The protein resides in the nucleus matrix. The protein localises to the cytoplasm. It is found in the cytoskeleton. Its subcellular location is the spindle. It localises to the midbody. The protein resides in the chromosome. Its function is as follows. Iron-sulfur (Fe-S) cluster binding motor protein that has a role in chromosome segregation during mitosis. Translocates PRC1 to the plus ends of interdigitating spindle microtubules during the metaphase to anaphase transition, an essential step for the formation of an organized central spindle midzone and midbody and for successful cytokinesis. May play a role in mitotic chromosomal positioning and bipolar spindle stabilization. This chain is Chromosome-associated kinesin KIF4A (KIF4A), found in Homo sapiens (Human).